We begin with the raw amino-acid sequence, 352 residues long: RING finger protein 39 (352 aa).

The segment at 20–67 (CPLCGGPFEDPVLLACEHSFCRSCLARCWGSPAAPGSEEATPSCPCCG) adopts an RING-type zinc-finger fold. The segment at 98-118 (PGARTGRRRGGRIPTMGCLDP) is disordered. Positions 142 to 352 (EDLPEDYPVV…APLRIVPGEA (211 aa)) constitute a B30.2/SPRY domain.

In terms of tissue distribution, expressed in the hippocampus. Expression is rapidly up-regulated in granule cells of the dentate gyrus after LTP induction.

It localises to the cytoplasm. It carries out the reaction S-ubiquitinyl-[E2 ubiquitin-conjugating enzyme]-L-cysteine + [acceptor protein]-L-lysine = [E2 ubiquitin-conjugating enzyme]-L-cysteine + N(6)-ubiquitinyl-[acceptor protein]-L-lysine.. It participates in protein modification; protein ubiquitination. In terms of biological role, plays an inhibitory role in anti-RNA viral innate immunity by targeting the adapter DDX3X and promoting its 'Lys-48'-linked polyubiquitination. Alternatively, enhances the cGAS-STING pathway activation by promoting 'Lys-63'-linked ubiquitination of STING1, facilitating the STING1-TBK1 complex formation and STING1 activation. The chain is RING finger protein 39 (Rnf39) from Rattus norvegicus (Rat).